Reading from the N-terminus, the 161-residue chain is Afimbrial adhesin AFA-I (161 aa).

Residues 1-21 form the signal peptide; sequence MKKLAIIGATSVMMMTGTAQA.

It belongs to the Dr-adhesin family.

It localises to the fimbrium. In terms of biological role, hemagglutinins of uropathogenic E.coli mediate adherence to the upper urinary tract. These adhesins bind to the Dr blood group antigen and also agglutinate human erythrocytes in the presence of D-mannose (mannose-resistant hemagglutination (MRHA)). In Escherichia coli, this protein is Afimbrial adhesin AFA-I (afaE1).